The chain runs to 221 residues: ATP phosphoribosyltransferase (221 aa).

This sequence belongs to the ATP phosphoribosyltransferase family. Short subfamily. Heteromultimer composed of HisG and HisZ subunits.

Its subcellular location is the cytoplasm. It carries out the reaction 1-(5-phospho-beta-D-ribosyl)-ATP + diphosphate = 5-phospho-alpha-D-ribose 1-diphosphate + ATP. It functions in the pathway amino-acid biosynthesis; L-histidine biosynthesis; L-histidine from 5-phospho-alpha-D-ribose 1-diphosphate: step 1/9. Catalyzes the condensation of ATP and 5-phosphoribose 1-diphosphate to form N'-(5'-phosphoribosyl)-ATP (PR-ATP). Has a crucial role in the pathway because the rate of histidine biosynthesis seems to be controlled primarily by regulation of HisG enzymatic activity. This chain is ATP phosphoribosyltransferase, found in Anaeromyxobacter sp. (strain K).